A 596-amino-acid chain; its full sequence is Fumarate reductase (cytochrome) (596 aa).

The first 25 residues, 1–25 (MKKMNLAVCIATLMGTAGLMGTAVA), serve as a signal peptide directing secretion. H33, C39, C42, H43, C61, C64, H65, H83, H86, C93, C96, H97, A99, H100, C107, C110, and H111 together coordinate heme c. Positions 143-596 (ALASAPHDTV…EEAAKYSKKN (454 aa)) are flavoprotein-like. Positions 162, 181, 189, 194, 195, 196, 303, and 369 each coordinate FAD. G195 lines the fumarate pocket. A succinate-binding site is contributed by G195. Y386 contacts heme c. The succinate site is built by H390, T402, and E403. 2 residues coordinate fumarate: T402 and E403. Residue R427 is the Proton donor of the active site. Position 529 (H529) interacts with fumarate. Residue H529 participates in succinate binding. FAD-binding residues include H530 and E559. 2 residues coordinate fumarate: R569 and G572. Residues R569 and G572 each contribute to the succinate site. FAD contacts are provided by A574 and I575.

It in the C-terminal section; belongs to the FAD-dependent oxidoreductase 2 family. FRD/SDH subfamily. Monomer. Requires FAD as cofactor. Heme c serves as cofactor.

Its subcellular location is the periplasm. The enzyme catalyses 2 Fe(III)-[cytochrome c] + succinate = fumarate + 2 Fe(II)-[cytochrome c] + 2 H(+). Mesaconic acid is a competitive inhibitor of fumarate reduction. Functionally, flavocytochrome that catalyzes the reduction of fumarate to succinate. Is essential for fumarate respiration during anaerobic growth, acting as the terminal reductase. Receives electrons from the membrane-bound tetraheme c-type cytochrome CymA. Is essentially unidirectional, catalyzing only fumarate reduction. Cannot reduce nitrite, dimethylsulphoxide, trimethylamine-N-oxide (TMAO) or sulfite. In vitro, can use the artificial electron donor methyl viologen. This Shewanella frigidimarina (strain NCIMB 400) protein is Fumarate reductase (cytochrome).